Reading from the N-terminus, the 93-residue chain is YcgL domain-containing protein VFMJ11_1829 (93 aa).

In terms of domain architecture, YcgL spans 1-84 (MFCSIYKSTK…PPENLLEKYK (84 aa)).

This is YcgL domain-containing protein VFMJ11_1829 from Aliivibrio fischeri (strain MJ11) (Vibrio fischeri).